A 250-amino-acid chain; its full sequence is 5'-nucleotidase SurE (250 aa).

A divalent metal cation contacts are provided by D8, D9, S40, and N95.

The protein belongs to the SurE nucleotidase family. It depends on a divalent metal cation as a cofactor.

It localises to the cytoplasm. The catalysed reaction is a ribonucleoside 5'-phosphate + H2O = a ribonucleoside + phosphate. In terms of biological role, nucleotidase that shows phosphatase activity on nucleoside 5'-monophosphates. This Nitratidesulfovibrio vulgaris (strain ATCC 29579 / DSM 644 / CCUG 34227 / NCIMB 8303 / VKM B-1760 / Hildenborough) (Desulfovibrio vulgaris) protein is 5'-nucleotidase SurE.